Consider the following 982-residue polypeptide: Hunchback-like protein (982 aa).

A disordered region spans residues 87–194 (QPGEKIHPDG…SNYQVTSEPV (108 aa)). A compositionally biased stretch (basic and acidic residues) spans 101 to 110 (PKEDGRKSSE). The span at 111–132 (HTNSYDVSASQSPSNDGAQSDS) shows a compositional bias: polar residues. Acidic residues predominate over residues 142 to 152 (CMTETEMDTDE). The span at 153 to 175 (KDSTIKPEDQATPKLEEGSDSKP) shows a compositional bias: basic and acidic residues. Polar residues predominate over residues 176 to 193 (ESTSVEGTSSNYQVTSEP). 7 consecutive C2H2-type zinc fingers follow at residues 336–358 (LVCP…MNTH), 361–384 (HQCS…RESH), 538–560 (FKCK…ARTH), 567–589 (LNCQ…YRNH), 595–617 (FQCK…MKSH), 623–647 (FRCM…KYNH), and 734–756 (LKCS…SMSH). The segment at 377–415 (KKHMRESHTVEEQLRAGFESEPAKESASSPKNLSLSKDG) is disordered. A disordered region spans residues 811–896 (EEMDQGSDSA…PPLHSSSIVA (86 aa)). 2 stretches are compositionally biased toward polar residues: residues 816–831 (GSDS…QISS) and 843–862 (SLEQ…SNDS). Over residues 863–875 (AMEKDGESADDAP) the composition is skewed to basic and acidic residues. 2 C2H2-type zinc fingers span residues 929 to 951 (FYCD…MRFH) and 957 to 981 (FMCS…QARH).

Belongs to the hunchback C2H2-type zinc-finger protein family. Expressed primarily in ectodermal cells during embryonic and larval development.

It localises to the nucleus. Functionally, required for the late stages of development. Plays a role in the developmental timing of postembryonic hypodermal seam cell fusion events and adult alae production. This Caenorhabditis elegans protein is Hunchback-like protein.